The chain runs to 579 residues: Laccase-4 (579 aa).

The first 28 residues, 1-28 (MTMAISSALPSPLLLAASLLLLIVQAQG), serve as a signal peptide directing secretion. Plastocyanin-like domains lie at 36–152 (NVQM…PKLG) and 162–316 (KEVP…YENP). N-linked (GlcNAc...) asparagine glycans are attached at residues N41 and N82. Positions 86 and 88 each coordinate Cu cation. N118 is a glycosylation site (N-linked (GlcNAc...) asparagine). Positions 131 and 133 each coordinate Cu cation. N-linked (GlcNAc...) asparagine glycosylation is found at N191, N207, N243, N304, N340, N347, N386, N393, N403, N439, N446, and N462. In terms of domain architecture, Plastocyanin-like 3 spans 429-563 (DFPVAPLSPF…RMAWLVLDGS (135 aa)). Cu cation is bound by residues H480, H483, H485, H542, C543, H544, and H548.

Belongs to the multicopper oxidase family. The cofactor is Cu cation.

The protein localises to the secreted. Its subcellular location is the extracellular space. It localises to the apoplast. It carries out the reaction 4 hydroquinone + O2 = 4 benzosemiquinone + 2 H2O. Functionally, lignin degradation and detoxification of lignin-derived products. This chain is Laccase-4 (LAC4), found in Oryza sativa subsp. japonica (Rice).